The following is a 359-amino-acid chain: MSKEKALESALSQIEKQFGKGAIMRLGDQEAAHDIDVIPSGIIALDVALGIGGYPKGRIIEIYGHESSGKTTLTLLAIAQCQKQGGTAAFVDAEHALDPKYAKLLGVDVDNLIVSQPDTGEQALEIADMLVRSGGVDIVVIDSVAALTPKAEIEGDMGDSHMGLQARLMSQALRKLTANIKRSNTLVIFINQIRMKIGVMFGNPETTTGGNALKFYSSVRLEVKKGGSIKDGIDVSGNEIKVKVVKNKVAPPFKQADFELIYGEGISLEAELIDLGAKYNIIEKSGAWYSYKGKKIGQGKEKSKEYLKENTAERDEIERAILELLLPNKYPNKDSNDSPKEGSKIKTKVNPAVTQDELI.

An ATP-binding site is contributed by 64–71; sequence GHESSGKT. The disordered stretch occupies residues 328 to 359; the sequence is NKYPNKDSNDSPKEGSKIKTKVNPAVTQDELI. A compositionally biased stretch (basic and acidic residues) spans 331 to 344; sequence PNKDSNDSPKEGSK.

The protein belongs to the RecA family.

The protein localises to the cytoplasm. In terms of biological role, can catalyze the hydrolysis of ATP in the presence of single-stranded DNA, the ATP-dependent uptake of single-stranded DNA by duplex DNA, and the ATP-dependent hybridization of homologous single-stranded DNAs. It interacts with LexA causing its activation and leading to its autocatalytic cleavage. The protein is Protein RecA of Francisella tularensis subsp. novicida (strain U112).